A 175-amino-acid chain; its full sequence is Large ribosomal subunit protein uL10 (175 aa).

It belongs to the universal ribosomal protein uL10 family. In terms of assembly, part of the ribosomal stalk of the 50S ribosomal subunit. The N-terminus interacts with L11 and the large rRNA to form the base of the stalk. The C-terminus forms an elongated spine to which L12 dimers bind in a sequential fashion forming a multimeric L10(L12)X complex.

Forms part of the ribosomal stalk, playing a central role in the interaction of the ribosome with GTP-bound translation factors. The sequence is that of Large ribosomal subunit protein uL10 from Methylococcus capsulatus (strain ATCC 33009 / NCIMB 11132 / Bath).